The following is a 344-amino-acid chain: Methionine import ATP-binding protein MetN (344 aa).

The ABC transporter domain occupies 2-241 (IEINRVNKVF…PKTELARKFI (240 aa)). 38–45 (GSSGAGKS) contacts ATP.

It belongs to the ABC transporter superfamily. Methionine importer (TC 3.A.1.24) family. The complex is composed of two ATP-binding proteins (MetN), two transmembrane proteins (MetI) and a solute-binding protein (MetQ).

The protein localises to the cell inner membrane. It catalyses the reaction L-methionine(out) + ATP + H2O = L-methionine(in) + ADP + phosphate + H(+). The catalysed reaction is D-methionine(out) + ATP + H2O = D-methionine(in) + ADP + phosphate + H(+). Functionally, part of the ABC transporter complex MetNIQ involved in methionine import. Responsible for energy coupling to the transport system. This chain is Methionine import ATP-binding protein MetN, found in Photobacterium profundum (strain SS9).